The chain runs to 197 residues: MAEIILNVEVRDGAGTGNARATRRAGKVPGVLYGGGKAPVNIAVKANEFRKSLYTGKLLGHLVTLQYGEEKQSVIAKAVQFHPVTDEPVHFDLYRVDEHQLIKIEVPVHFKNHETSVGLKKGGTLEVIRHTVELACPADKIPEELVIDLAGHDIGDVIRISEVKLPEGVKPAMDRDFVIANVKASSAAQSDAGDTTA.

It belongs to the bacterial ribosomal protein bL25 family. CTC subfamily. As to quaternary structure, part of the 50S ribosomal subunit; part of the 5S rRNA/L5/L18/L25 subcomplex. Contacts the 5S rRNA. Binds to the 5S rRNA independently of L5 and L18.

This is one of the proteins that binds to the 5S RNA in the ribosome where it forms part of the central protuberance. The sequence is that of Large ribosomal subunit protein bL25 from Caulobacter vibrioides (strain ATCC 19089 / CIP 103742 / CB 15) (Caulobacter crescentus).